Reading from the N-terminus, the 279-residue chain is 4-hydroxy-3-methylbut-2-enyl diphosphate reductase (279 aa).

C12 is a [4Fe-4S] cluster binding site. (2E)-4-hydroxy-3-methylbut-2-enyl diphosphate contacts are provided by H40 and H70. 2 residues coordinate dimethylallyl diphosphate: H40 and H70. H40 and H70 together coordinate isopentenyl diphosphate. C92 is a [4Fe-4S] cluster binding site. Residue H119 participates in (2E)-4-hydroxy-3-methylbut-2-enyl diphosphate binding. H119 is a binding site for dimethylallyl diphosphate. H119 provides a ligand contact to isopentenyl diphosphate. Residue E121 is the Proton donor of the active site. T151 contacts (2E)-4-hydroxy-3-methylbut-2-enyl diphosphate. C181 is a [4Fe-4S] cluster binding site. Positions 209, 210, 211, and 251 each coordinate (2E)-4-hydroxy-3-methylbut-2-enyl diphosphate. 4 residues coordinate dimethylallyl diphosphate: S209, S210, N211, and S251. Residues S209, S210, N211, and S251 each contribute to the isopentenyl diphosphate site.

Belongs to the IspH family. It depends on [4Fe-4S] cluster as a cofactor.

It catalyses the reaction isopentenyl diphosphate + 2 oxidized [2Fe-2S]-[ferredoxin] + H2O = (2E)-4-hydroxy-3-methylbut-2-enyl diphosphate + 2 reduced [2Fe-2S]-[ferredoxin] + 2 H(+). The catalysed reaction is dimethylallyl diphosphate + 2 oxidized [2Fe-2S]-[ferredoxin] + H2O = (2E)-4-hydroxy-3-methylbut-2-enyl diphosphate + 2 reduced [2Fe-2S]-[ferredoxin] + 2 H(+). It participates in isoprenoid biosynthesis; dimethylallyl diphosphate biosynthesis; dimethylallyl diphosphate from (2E)-4-hydroxy-3-methylbutenyl diphosphate: step 1/1. The protein operates within isoprenoid biosynthesis; isopentenyl diphosphate biosynthesis via DXP pathway; isopentenyl diphosphate from 1-deoxy-D-xylulose 5-phosphate: step 6/6. Its function is as follows. Catalyzes the conversion of 1-hydroxy-2-methyl-2-(E)-butenyl 4-diphosphate (HMBPP) into a mixture of isopentenyl diphosphate (IPP) and dimethylallyl diphosphate (DMAPP). Acts in the terminal step of the DOXP/MEP pathway for isoprenoid precursor biosynthesis. In Thermotoga neapolitana (strain ATCC 49049 / DSM 4359 / NBRC 107923 / NS-E), this protein is 4-hydroxy-3-methylbut-2-enyl diphosphate reductase.